A 500-amino-acid polypeptide reads, in one-letter code: Transcription termination factor MTERF8, chloroplastic (500 aa).

Residues 1-64 constitute a chloroplast transit peptide; that stretch reads MVILSLVSCS…NHREPALTFR (64 aa).

The protein belongs to the mTERF family.

The protein localises to the plastid. The protein resides in the chloroplast. In terms of biological role, transcription termination factor that is transcriptionally active in chloroplasts. The sequence is that of Transcription termination factor MTERF8, chloroplastic from Arabidopsis thaliana (Mouse-ear cress).